Consider the following 118-residue polypeptide: D-dopachrome decarboxylase (118 aa).

Pro2 is subject to N-acetylproline. Residue Lys33 is modified to N6-acetyllysine.

It belongs to the MIF family. As to quaternary structure, homotrimer.

It is found in the cytoplasm. The enzyme catalyses D-dopachrome + H(+) = 5,6-dihydroxyindole + CO2. Its function is as follows. Tautomerization of D-dopachrome with decarboxylation to give 5,6-dihydroxyindole (DHI). In Bos taurus (Bovine), this protein is D-dopachrome decarboxylase (DDT).